Here is a 1592-residue protein sequence, read N- to C-terminus: Probable serine/threonine-protein kinase DDB_G0293958 (1592 aa).

One can recognise a Protein kinase 1 domain in the interval 1-302 (MTGFEIFKKK…CLNYLKEKLI (302 aa)). ATP contacts are provided by residues 2–10 (TGFEIFKKK) and K43. Catalysis depends on D158, which acts as the Proton acceptor. Disordered regions lie at residues 348–402 (INNN…NNNN), 455–526 (FNDI…SNYN), and 837–867 (KNNN…NDKS). Over residues 349–402 (NNNNNNNNNNNNNNNNNNNNNNNNNNNNNNNNNNNNNNNNNNNNNNNNNNNNNN) the composition is skewed to low complexity. Positions 461-518 (STTGEEEEEEKKDNLKRQNENNQIEQEDKGEKHLKETLNNNNNNNNNNNNNNNNNNNN) form a coiled coil. Over residues 486–496 (QEDKGEKHLKE) the composition is skewed to basic and acidic residues. Composition is skewed to low complexity over residues 499-526 (NNNN…SNYN) and 837-864 (KNNN…NNSN). Residues 1342-1592 (LGTYNLIGDS…KELIECLNKL (251 aa)) enclose the Protein kinase 2 domain. ATP is bound by residues 1348 to 1356 (IGDSVFRNI) and K1376. D1474 acts as the Proton acceptor in catalysis.

The protein belongs to the protein kinase superfamily. Ser/Thr protein kinase family.

It catalyses the reaction L-seryl-[protein] + ATP = O-phospho-L-seryl-[protein] + ADP + H(+). It carries out the reaction L-threonyl-[protein] + ATP = O-phospho-L-threonyl-[protein] + ADP + H(+). The chain is Probable serine/threonine-protein kinase DDB_G0293958 from Dictyostelium discoideum (Social amoeba).